Reading from the N-terminus, the 331-residue chain is Peroxidase 69 (331 aa).

Residues 1–23 (MGRGYNLLFVLVTFLVLVAAVTA) form the signal peptide. 4 disulfides stabilise this stretch: C46–C122, C79–C84, C128–C327, and C205–C237. The Proton acceptor role is filled by H77. Ca(2+)-binding residues include D78, V81, G83, D85, and S87. N-linked (GlcNAc...) asparagine glycosylation is present at N93. P168 serves as a coordination point for substrate. H198 lines the heme b pocket. T199 provides a ligand contact to Ca(2+). An N-linked (GlcNAc...) asparagine glycan is attached at N216. Ca(2+) is bound by residues D248, S251, and D256.

Belongs to the peroxidase family. Classical plant (class III) peroxidase subfamily. Heme b is required as a cofactor. The cofactor is Ca(2+). As to expression, mainly expressed in roots and slightly in leaves.

The protein localises to the secreted. The enzyme catalyses 2 a phenolic donor + H2O2 = 2 a phenolic radical donor + 2 H2O. Removal of H(2)O(2), oxidation of toxic reductants, biosynthesis and degradation of lignin, suberization, auxin catabolism, response to environmental stresses such as wounding, pathogen attack and oxidative stress. These functions might be dependent on each isozyme/isoform in each plant tissue. This chain is Peroxidase 69 (PER69), found in Arabidopsis thaliana (Mouse-ear cress).